Reading from the N-terminus, the 346-residue chain is Cyclin-dependent kinase 20 (346 aa).

A Protein kinase domain is found at 4–288 (YCILGRIGEG…ASKALLHQYF (285 aa)). ATP is bound by residues 10–18 (IGEGAHGIV) and lysine 33. The Proton acceptor role is filled by aspartate 127.

Belongs to the protein kinase superfamily. CMGC Ser/Thr protein kinase family. CDC2/CDKX subfamily. As to quaternary structure, monomer. Interacts with TBC1D32 and MAK.

Its subcellular location is the nucleus. The protein resides in the cytoplasm. The protein localises to the cell projection. It is found in the cilium. The enzyme catalyses L-seryl-[protein] + ATP = O-phospho-L-seryl-[protein] + ADP + H(+). The catalysed reaction is L-threonyl-[protein] + ATP = O-phospho-L-threonyl-[protein] + ADP + H(+). Required for high-level Shh responses in the developing neural tube. Together with TBC1D32, controls the structure of the primary cilium by coordinating assembly of the ciliary membrane and axoneme, allowing GLI2 to be properly activated in response to SHH signaling. Involved in cell growth. Activates CDK2, a kinase involved in the control of the cell cycle, by phosphorylating residue 'Thr-160'. This chain is Cyclin-dependent kinase 20 (CDK20), found in Pongo abelii (Sumatran orangutan).